Here is a 276-residue protein sequence, read N- to C-terminus: Ribonuclease T2 (276 aa).

The signal sequence occupies residues 1 to 17; it reads MGMLALGAMQLAAGAVF. 5 disulfide bridges follow: Cys22–Cys41, Cys30–Cys77, Cys40–Cys143, Cys85–Cys135, and Cys208–Cys242. An N-linked (GlcNAc...) asparagine glycan is attached at Asn32. The active site involves His70. Residue Asn93 is glycosylated (N-linked (GlcNAc...) asparagine). Residues Glu128 and His132 contribute to the active site. The N-linked (GlcNAc...) asparagine glycan is linked to Asn256.

Belongs to the RNase T2 family.

It catalyses the reaction a ribonucleotidyl-ribonucleotide-RNA + H2O = a 3'-end 3'-phospho-ribonucleotide-RNA + a 5'-end dephospho-ribonucleoside-RNA + H(+). The chain is Ribonuclease T2 (rntB) from Aspergillus oryzae (strain ATCC 42149 / RIB 40) (Yellow koji mold).